Here is an 845-residue protein sequence, read N- to C-terminus: Protein P (845 aa).

Residues 1 to 179 are terminal protein domain (TP); that stretch reads MPLSYQHFRK…FCGSPYSWEQ (179 aa). Residues 180 to 348 form a spacer region; that stretch reads ELQHGRLVIK…YCLSHLVNLR (169 aa). The tract at residues 226–252 is disordered; the sequence is GLQPRQGRLASSQPSRSGSIRAKAHPS. A compositionally biased stretch (polar residues) spans 234-243; sequence LASSQPSRSG. Positions 349 to 692 are polymerase/reverse transcriptase domain (RT); the sequence is EDWGPCDEHG…YMNLYPVARQ (344 aa). One can recognise a Reverse transcriptase domain in the interval 359–602; sequence EHHIRIPRTP…YSLNFMGYII (244 aa). Residues Asp-431, Asp-553, and Asp-554 each coordinate Mg(2+). A rnaseH domain (RH) region spans residues 693-845; the sequence is RPGLCQVFAD…SPLHVAWRPP (153 aa).

The protein belongs to the hepadnaviridae P protein family.

The enzyme catalyses DNA(n) + a 2'-deoxyribonucleoside 5'-triphosphate = DNA(n+1) + diphosphate. It catalyses the reaction Endonucleolytic cleavage to 5'-phosphomonoester.. Activated by host HSP70 and HSP40 in vitro to be able to bind the epsilon loop of the pgRNA. Because deletion of the RNase H region renders the protein partly chaperone-independent, the chaperones may be needed indirectly to relieve occlusion of the RNA-binding site by this domain. Inhibited by several reverse-transcriptase inhibitors: Lamivudine, Adefovir and Entecavir. Its function is as follows. Multifunctional enzyme that converts the viral RNA genome into dsDNA in viral cytoplasmic capsids. This enzyme displays a DNA polymerase activity that can copy either DNA or RNA templates, and a ribonuclease H (RNase H) activity that cleaves the RNA strand of RNA-DNA heteroduplexes in a partially processive 3'- to 5'-endonucleasic mode. Neo-synthesized pregenomic RNA (pgRNA) are encapsidated together with the P protein, and reverse-transcribed inside the nucleocapsid. Initiation of reverse-transcription occurs first by binding the epsilon loop on the pgRNA genome, and is initiated by protein priming, thereby the 5'-end of (-)DNA is covalently linked to P protein. Partial (+)DNA is synthesized from the (-)DNA template and generates the relaxed circular DNA (RC-DNA) genome. After budding and infection, the RC-DNA migrates in the nucleus, and is converted into a plasmid-like covalently closed circular DNA (cccDNA). The activity of P protein does not seem to be necessary for cccDNA generation, and is presumably released from (+)DNA by host nuclear DNA repair machinery. The polypeptide is Protein P (Homo sapiens (Human)).